Reading from the N-terminus, the 434-residue chain is Glutamate-1-semialdehyde 2,1-aminomutase 1 (434 aa).

Position 270 is an N6-(pyridoxal phosphate)lysine (K270).

This sequence belongs to the class-III pyridoxal-phosphate-dependent aminotransferase family. HemL subfamily. Homodimer. Pyridoxal 5'-phosphate is required as a cofactor.

It is found in the cytoplasm. The catalysed reaction is (S)-4-amino-5-oxopentanoate = 5-aminolevulinate. The protein operates within porphyrin-containing compound metabolism; protoporphyrin-IX biosynthesis; 5-aminolevulinate from L-glutamyl-tRNA(Glu): step 2/2. This is Glutamate-1-semialdehyde 2,1-aminomutase 1 from Bacillus anthracis (strain CDC 684 / NRRL 3495).